The sequence spans 73 residues: Omega-conotoxin CVID (73 aa).

The first 22 residues, 1–22 (MKLTCVVIVAVLLLTACQLITA), serve as a signal peptide directing secretion. Positions 23–45 (DDSRGTQKHRALRSDTKLSMSTR) are excised as a propeptide. 3 disulfide bridges follow: C46-C61, C53-C65, and C60-C72. C72 bears the Cysteine amide mark.

It belongs to the conotoxin O1 superfamily. In terms of tissue distribution, expressed by the venom duct.

The protein localises to the secreted. Its function is as follows. Omega-conotoxins act at presynaptic membranes, they bind and block voltage-gated calcium channels. This toxin inhibits neurotransmitter release, it blocks N-type calcium channels, probably a N-type (Cav2.2/CACNA1B) calcium channel variant. This Conus catus (Cat cone) protein is Omega-conotoxin CVID.